The primary structure comprises 87 residues: MANIKQQIKRNKTNEKRRLKNVSFKSSVKTAIKKLNKAIENKNKSEALLLLNLSYKKLDKGISKKVYSKNFVSRHKSNLSKLVNNIN.

Residues 1–21 form a disordered region; the sequence is MANIKQQIKRNKTNEKRRLKN. Positions 7 to 20 are enriched in basic residues; the sequence is QIKRNKTNEKRRLK.

Belongs to the bacterial ribosomal protein bS20 family.

Its function is as follows. Binds directly to 16S ribosomal RNA. The polypeptide is Small ribosomal subunit protein bS20 (Phytoplasma mali (strain AT)).